A 137-amino-acid polypeptide reads, in one-letter code: Acidic phospholipase A2 CC-PLA2-1 (137 aa).

Residues M1 to G16 form the signal peptide. Intrachain disulfides connect C42/C130, C44/C60, C59/C110, C65/C137, C66/C103, C73/C96, and C90/C101. Ca(2+)-binding residues include Y43, G45, and G47. Residue H63 is part of the active site. Residue D64 participates in Ca(2+) binding. Residue D104 is part of the active site.

The protein belongs to the phospholipase A2 family. Group II subfamily. D49 sub-subfamily. The cofactor is Ca(2+). In terms of processing, glycosylated (2.5%). In terms of tissue distribution, expressed by the venom gland.

The protein resides in the secreted. It carries out the reaction a 1,2-diacyl-sn-glycero-3-phosphocholine + H2O = a 1-acyl-sn-glycero-3-phosphocholine + a fatty acid + H(+). Functionally, snake venom phospholipase A2 (PLA2) that inhibits blood coagulation and platelet aggregation induced by ADP and arachidonic acid. Inhibits tumor cell adhesion and migration in a dose-dependent manner. Abolishes the attachment of human brain microvascular endothelial cells (HBMEC) to fibrinogen (IC(50)=0.12 uM) and dramatically reduces its adhesion to fibronectin (IC(50)=0.12 uM), whereas no effect is observed on type I collagen, vitronectin or laminin 1. Also blocks the cell migration toward fibronectin and fibrinogen. These effects are not dependent of the catalytic activity, but are mediated by alpha-5/beta-1 (ITGA5/ITGB1) and alpha-v-containing (ITGAV) integrins. Also shows anti-angiogenic activity in chicken chorioallantoix membrane assay. Has a relatively high enzymatic activity. PLA2 catalyzes the calcium-dependent hydrolysis of the 2-acyl groups in 3-sn-phosphoglycerides. In Cerastes cerastes (Horned desert viper), this protein is Acidic phospholipase A2 CC-PLA2-1.